Here is a 352-residue protein sequence, read N- to C-terminus: MIEADRLIAATGPREREEIQDRAIRPVSLADYIGQPSVREQMELFIQAARGRNESLDHTLIFGPPGLGKTTLANIIAEEMGVSIKSTSGPVLERPGDLAALLTNLEPHDVLFIDEIHRLSPIVEEVLYPAMEDFQLDIMIGEGPAARSIKLDLPPFTLVGATTRAGMLTNPLRDRFGIVQRLEFYSTADLATIVSRSAGILGLPLDPEGAFEVARRARGTPRIANRLLRRVRDFAEVRAKGHITKPIADLALNLLDVDERGFDHQDRRLLLTMIEKFDGGPVGVDSLAAAISEERHTIEDVLEPYLIQQGYIMRTPRGRVVTRHAYLHFGLNIPSRMGDMPVVDEFLDAVDD.

Residues 4-185 (ADRLIAATGP…FGIVQRLEFY (182 aa)) form a large ATPase domain (RuvB-L) region. Residues isoleucine 24, arginine 25, glycine 66, lysine 69, threonine 70, threonine 71, 132-134 (EDF), arginine 175, tyrosine 185, and arginine 222 each bind ATP. Mg(2+) is bound at residue threonine 70. The tract at residues 186 to 256 (STADLATIVS…IADLALNLLD (71 aa)) is small ATPAse domain (RuvB-S). A head domain (RuvB-H) region spans residues 259–352 (ERGFDHQDRR…VDEFLDAVDD (94 aa)). Positions 295, 314, and 319 each coordinate DNA.

The protein belongs to the RuvB family. In terms of assembly, homohexamer. Forms an RuvA(8)-RuvB(12)-Holliday junction (HJ) complex. HJ DNA is sandwiched between 2 RuvA tetramers; dsDNA enters through RuvA and exits via RuvB. An RuvB hexamer assembles on each DNA strand where it exits the tetramer. Each RuvB hexamer is contacted by two RuvA subunits (via domain III) on 2 adjacent RuvB subunits; this complex drives branch migration. In the full resolvosome a probable DNA-RuvA(4)-RuvB(12)-RuvC(2) complex forms which resolves the HJ.

It localises to the cytoplasm. It catalyses the reaction ATP + H2O = ADP + phosphate + H(+). In terms of biological role, the RuvA-RuvB-RuvC complex processes Holliday junction (HJ) DNA during genetic recombination and DNA repair, while the RuvA-RuvB complex plays an important role in the rescue of blocked DNA replication forks via replication fork reversal (RFR). RuvA specifically binds to HJ cruciform DNA, conferring on it an open structure. The RuvB hexamer acts as an ATP-dependent pump, pulling dsDNA into and through the RuvAB complex. RuvB forms 2 homohexamers on either side of HJ DNA bound by 1 or 2 RuvA tetramers; 4 subunits per hexamer contact DNA at a time. Coordinated motions by a converter formed by DNA-disengaged RuvB subunits stimulates ATP hydrolysis and nucleotide exchange. Immobilization of the converter enables RuvB to convert the ATP-contained energy into a lever motion, pulling 2 nucleotides of DNA out of the RuvA tetramer per ATP hydrolyzed, thus driving DNA branch migration. The RuvB motors rotate together with the DNA substrate, which together with the progressing nucleotide cycle form the mechanistic basis for DNA recombination by continuous HJ branch migration. Branch migration allows RuvC to scan DNA until it finds its consensus sequence, where it cleaves and resolves cruciform DNA. The chain is Holliday junction branch migration complex subunit RuvB from Pseudomonas fluorescens (strain ATCC BAA-477 / NRRL B-23932 / Pf-5).